We begin with the raw amino-acid sequence, 144 residues long: Large ribosomal subunit protein uL13 (144 aa).

Belongs to the universal ribosomal protein uL13 family. Part of the 50S ribosomal subunit.

In terms of biological role, this protein is one of the early assembly proteins of the 50S ribosomal subunit, although it is not seen to bind rRNA by itself. It is important during the early stages of 50S assembly. The polypeptide is Large ribosomal subunit protein uL13 (Desulfovibrio desulfuricans (strain ATCC 27774 / DSM 6949 / MB)).